The following is an 82-amino-acid chain: RNA-binding protein Hfq (82 aa).

Positions 11-71 (DTFLNHVRKT…ISTIMPGAPI (61 aa)) constitute a Sm domain.

The protein belongs to the Hfq family. In terms of assembly, homohexamer.

In terms of biological role, RNA chaperone that binds small regulatory RNA (sRNAs) and mRNAs to facilitate mRNA translational regulation in response to envelope stress, environmental stress and changes in metabolite concentrations. Also binds with high specificity to tRNAs. In Bradyrhizobium sp. (strain BTAi1 / ATCC BAA-1182), this protein is RNA-binding protein Hfq.